Here is a 393-residue protein sequence, read N- to C-terminus: Sulfate adenylyltransferase (393 aa).

It belongs to the sulfate adenylyltransferase family.

The enzyme catalyses sulfate + ATP + H(+) = adenosine 5'-phosphosulfate + diphosphate. Its pathway is sulfur metabolism; hydrogen sulfide biosynthesis; sulfite from sulfate: step 1/3. The protein is Sulfate adenylyltransferase of Symbiobacterium thermophilum (strain DSM 24528 / JCM 14929 / IAM 14863 / T).